The following is a 375-amino-acid chain: Growth/differentiation factor 8 (375 aa).

A signal peptide spans 1–23 (MQKIVVYVYIYLFVQISVDPVAL). Positions 24–266 (DGSSQPTENT…VTDTPKRSRR (243 aa)) are excised as a propeptide. Asn-71 carries N-linked (GlcNAc...) asparagine glycosylation. Cystine bridges form between Cys-272–Cys-282, Cys-281–Cys-340, Cys-309–Cys-372, and Cys-313–Cys-374.

Belongs to the TGF-beta family. In terms of assembly, homodimer; disulfide-linked.

The protein resides in the secreted. Its function is as follows. Acts specifically as a negative regulator of skeletal muscle growth. The protein is Growth/differentiation factor 8 (MSTN) of Coturnix coturnix (Common quail).